The sequence spans 1150 residues: Voltage-dependent calcium channel subunit alpha-2/delta-2 (1150 aa).

Residues 1–18 (MAVPARTCGASRPGPART) form the signal peptide. The tract at residues 1 to 41 (MAVPARTCGASRPGPARTARPWPGCGPHPGPGTRRPTSGPP) is disordered. At 19–1113 (ARPWPGCGPH…TEDTSDCGRG (1095 aa)) the chain is on the extracellular side. Residues 291–469 (DMVIIVDVSG…INTQEYLDVL (179 aa)) enclose the VWFA domain. The a divalent metal cation site is built by Asp-297, Ser-299, and Ser-301. An MIDAS-like motif motif is present at residues 297–301 (DVSGS). Asn-386, Asn-418, Asn-507, Asn-540, Asn-624, and Asn-861 each carry an N-linked (GlcNAc...) asparagine glycan. Cys-443 and Cys-1098 are disulfide-bonded. The Cache domain occupies 485–574 (WTNVYEDALG…KPQTTNFREP (90 aa)). A helical membrane pass occupies residues 1114–1134 (ASFPPSLGVLVSLQLLLLLGL). At 1135–1150 (PPRPQPQVLVHASRRL) the chain is on the cytoplasmic side.

The protein belongs to the calcium channel subunit alpha-2/delta family. As to quaternary structure, dimer formed of alpha-2-2 and delta-2 chains; disulfide-linked. Voltage-dependent calcium channels are multisubunit complexes, consisting of alpha-1 (CACNA1), alpha-2 (CACNA2D), beta (CACNB) and delta (CACNA2D) subunits in a 1:1:1:1 ratio. Post-translationally, may be proteolytically processed into subunits alpha-2-2 and delta-2 that are disulfide-linked. It is however unclear whether such cleavage really takes place in vivo and has a functional role. As to expression, predominantly present in cerebellar cortex. Present in various lung tumor cell lines, while it is absent in normal lung (at protein level). Highly expressed in heart, lung, testis, pancreas and skeletal muscle. Also expressed in kidney, liver, placenta and brain.

The protein resides in the membrane. In terms of biological role, the alpha-2/delta subunit of voltage-dependent calcium channels regulates calcium current density and activation/inactivation kinetics of the calcium channel. Acts as a regulatory subunit for P/Q-type calcium channel (CACNA1A), N-type (CACNA1B), L-type (CACNA1C OR CACNA1D) and possibly T-type (CACNA1G). Overexpression induces apoptosis. In Homo sapiens (Human), this protein is Voltage-dependent calcium channel subunit alpha-2/delta-2 (CACNA2D2).